The primary structure comprises 976 residues: Vacuolar membrane protease (976 aa).

At 1–15 (MKLKSVFRSVLKYRK) the chain is on the cytoplasmic side. A helical membrane pass occupies residues 16-36 (TNLSLLLLITYSIITLLYIFD). At 37–359 (HERYKLNLPK…KFFVISAKTL (323 aa)) the chain is on the vacuolar side. N96 and N121 each carry an N-linked (GlcNAc...) asparagine glycan. Residues H156 and D168 each coordinate Zn(2+). N-linked (GlcNAc...) asparagine glycosylation is present at N189. E200 functions as the Proton acceptor in the catalytic mechanism. A Zn(2+)-binding site is contributed by E201. N-linked (GlcNAc...) asparagine glycans are attached at residues N212 and N217. E226 and H300 together coordinate Zn(2+). Residues 360–380 (FYWNCIFLLVSPVVAIGLYLI) traverse the membrane as a helical segment. At 381–392 (SRDRMTWKSHSW) the chain is on the cytoplasmic side. The helical transmembrane segment at 393 to 412 (LSWTRFPLSLAAGIIVQKLF) threads the bilayer. Residues 413–428 (SNDIIRSNPLTFSRNY) are Vacuolar-facing. The chain crosses the membrane as a helical span at residues 429–449 (FWPISAFFTQVIFTSYVLINC). Residues 450-461 (SNFFFPCADMKS) are Cytoplasmic-facing. The helical transmembrane segment at 462–482 (LSIIELFIILWTILLFTSKLL) threads the bilayer. Over 483-496 (YSSDYRYTGLYPLS) the chain is Vacuolar. Residues 497–517 (IFFLLSTIAAILRLLALALGM) traverse the membrane as a helical segment. Residues 518–627 (RTRKRLGREC…NSLKLEYTDY (110 aa)) lie on the Cytoplasmic side of the membrane. Residues 528–610 (RDHHSNYSSH…PLLKGSNSME (83 aa)) are disordered. The segment covering 549-558 (NLEQPQDQFT) has biased composition (polar residues). A compositionally biased stretch (low complexity) spans 559–570 (SSQDDQASIQDD). Over residues 582 to 601 (NVDEDHGMDSSSQQHDERVP) the composition is skewed to basic and acidic residues. The helical transmembrane segment at 628–648 (AWIIQFLLIVPIPSFILFNSV) threads the bilayer. At 649 to 668 (DVIMDALNHTVQEGSKATFD) the chain is on the vacuolar side. N656 is a glycosylation site (N-linked (GlcNAc...) asparagine). A helical membrane pass occupies residues 669–689 (VLRFGMVGSILMALPILPFFY). The Cytoplasmic segment spans residues 690–692 (KVN). A helical membrane pass occupies residues 693 to 713 (YITISLTALLFLISASKTLLV). Topologically, residues 714 to 976 (HPFTNSNPLK…LVIVKDAIIL (263 aa)) are vacuolar. N-linked (GlcNAc...) asparagine glycans are attached at residues N768, N796, N811, N866, and N937.

Belongs to the peptidase M28 family. The cofactor is Zn(2+).

It localises to the vacuole membrane. Its function is as follows. May be involved in vacuolar sorting and osmoregulation. This is Vacuolar membrane protease from Saccharomyces cerevisiae (strain AWRI1631) (Baker's yeast).